The chain runs to 137 residues: ATP synthase epsilon chain, chloroplastic (137 aa).

The protein belongs to the ATPase epsilon chain family. F-type ATPases have 2 components, CF(1) - the catalytic core - and CF(0) - the membrane proton channel. CF(1) has five subunits: alpha(3), beta(3), gamma(1), delta(1), epsilon(1). CF(0) has three main subunits: a, b and c.

It localises to the plastid. The protein localises to the chloroplast thylakoid membrane. Produces ATP from ADP in the presence of a proton gradient across the membrane. The sequence is that of ATP synthase epsilon chain, chloroplastic from Pisum sativum (Garden pea).